Reading from the N-terminus, the 418-residue chain is Glutamyl-tRNA(Gln) amidotransferase subunit D (418 aa).

The Asparaginase/glutaminase domain maps to 74-405 (KNISILSTGG…EEAKELMPKN (332 aa)). Active-site residues include T84, T160, D161, and K237.

The protein belongs to the asparaginase 1 family. GatD subfamily. As to quaternary structure, heterodimer of GatD and GatE.

The catalysed reaction is L-glutamyl-tRNA(Gln) + L-glutamine + ATP + H2O = L-glutaminyl-tRNA(Gln) + L-glutamate + ADP + phosphate + H(+). In terms of biological role, allows the formation of correctly charged Gln-tRNA(Gln) through the transamidation of misacylated Glu-tRNA(Gln) in organisms which lack glutaminyl-tRNA synthetase. The reaction takes place in the presence of glutamine and ATP through an activated gamma-phospho-Glu-tRNA(Gln). The GatDE system is specific for glutamate and does not act on aspartate. This is Glutamyl-tRNA(Gln) amidotransferase subunit D from Methanococcus maripaludis (strain C6 / ATCC BAA-1332).